The following is a 387-amino-acid chain: Phosphoglycerate kinase (387 aa).

Substrate-binding positions include 21-23, Arg-36, and 59-62; these read DLN and HLGR. Position 84 is an N6-acetyllysine (Lys-84). Positions 113 and 146 each coordinate substrate. ATP contacts are provided by residues Lys-197, Glu-314, and 340 to 343; that span reads GGDT.

The protein belongs to the phosphoglycerate kinase family. In terms of assembly, monomer.

The protein resides in the cytoplasm. The enzyme catalyses (2R)-3-phosphoglycerate + ATP = (2R)-3-phospho-glyceroyl phosphate + ADP. Its pathway is carbohydrate degradation; glycolysis; pyruvate from D-glyceraldehyde 3-phosphate: step 2/5. The sequence is that of Phosphoglycerate kinase (pgk) from Escherichia coli O157:H7.